Here is a 284-residue protein sequence, read N- to C-terminus: Ribosomal RNA small subunit methyltransferase A (284 aa).

Residues Asn-22, Leu-24, Gly-49, Glu-70, Asp-97, and Asn-117 each coordinate S-adenosyl-L-methionine.

It belongs to the class I-like SAM-binding methyltransferase superfamily. rRNA adenine N(6)-methyltransferase family. RsmA subfamily.

The protein resides in the cytoplasm. It catalyses the reaction adenosine(1518)/adenosine(1519) in 16S rRNA + 4 S-adenosyl-L-methionine = N(6)-dimethyladenosine(1518)/N(6)-dimethyladenosine(1519) in 16S rRNA + 4 S-adenosyl-L-homocysteine + 4 H(+). Functionally, specifically dimethylates two adjacent adenosines (A1518 and A1519) in the loop of a conserved hairpin near the 3'-end of 16S rRNA in the 30S particle. May play a critical role in biogenesis of 30S subunits. The polypeptide is Ribosomal RNA small subunit methyltransferase A (Desulforapulum autotrophicum (strain ATCC 43914 / DSM 3382 / VKM B-1955 / HRM2) (Desulfobacterium autotrophicum)).